The primary structure comprises 273 residues: Large ribosomal subunit protein uL2 (273 aa).

Residues 224 to 260 form a disordered region; it reads AMNPVDHPHGGGEGKTSGGRHPVTPWGKKTKGKKTRK. Residues 251 to 260 are compositionally biased toward basic residues; sequence KKTKGKKTRK.

The protein belongs to the universal ribosomal protein uL2 family. As to quaternary structure, part of the 50S ribosomal subunit. Forms a bridge to the 30S subunit in the 70S ribosome.

Functionally, one of the primary rRNA binding proteins. Required for association of the 30S and 50S subunits to form the 70S ribosome, for tRNA binding and peptide bond formation. It has been suggested to have peptidyltransferase activity; this is somewhat controversial. Makes several contacts with the 16S rRNA in the 70S ribosome. This is Large ribosomal subunit protein uL2 from Orientia tsutsugamushi (strain Ikeda) (Rickettsia tsutsugamushi).